We begin with the raw amino-acid sequence, 251 residues long: Hydroxypyruvate/pyruvate aldolase (251 aa).

The active-site Proton acceptor is the His44. Arg69 serves as a coordination point for 3-hydroxypyruvate. Glu145 contacts Mg(2+). 3-hydroxypyruvate is bound by residues Thr170 and Asp171. Asp171 is a binding site for Mg(2+).

The protein belongs to the HpcH/HpaI aldolase family. Homohexamer. Trimer of homodimers. Mn(2+) is required as a cofactor. It depends on Mg(2+) as a cofactor. Co(2+) serves as cofactor. Requires Zn(2+) as cofactor.

The catalysed reaction is D-glyceraldehyde + 3-hydroxypyruvate = 2-dehydro-D-galactonate. It carries out the reaction D-glyceraldehyde + pyruvate = 2-dehydro-3-deoxy-L-galactonate. The enzyme catalyses L-glyceraldehyde + 3-hydroxypyruvate = (3S,4S,5S)-3,4,5,6-tetrahydroxy-2-oxohexanoate. It catalyses the reaction (R)-lactaldehyde + 3-hydroxypyruvate = (3S,4S,5R)-3,4,5-trihydroxy-2-oxohexanoate. The catalysed reaction is (R)-lactaldehyde + 3-hydroxypyruvate = (3S,4R,5R)-3,4,5-trihydroxy-2-oxohexanoate. It carries out the reaction (S)-lactaldehyde + 3-hydroxypyruvate = (3S,4S,5S)-3,4,5-trihydroxy-2-oxohexanoate. The enzyme catalyses D-erythrose + 3-hydroxypyruvate = (3S,4S,5R,6R)-3,4,5,6,7-pentahydroxy-2-oxoheptanoate. Binding of substrate induces a dynamic movement of the metal cofactor between an inactive coordination sphere to a catalytically active one. When oxaloacetate is used as substrate, activity is increased in the presence of micromolar concentrations of inorganic phosphate. The phosphate does not improve the binding of the substrate, but exclusively increases its rate of decarboxylation. Excessive phosphate concentrations negatively affect the reaction rate by removing the metal cofactor. In terms of biological role, aldolase which can catalyze in vitro the aldolisation reaction between hydroxypyruvate (HPA) or pyruvate (PA) and D-glyceraldehyde (D-GA). The condensation of hydroxypyruvate and D-glyceraldehyde produces 2-dehydro-D-galactonate as the major product. The condensation of pyruvate and D-glyceraldehyde produces 2-dehydro-3-deoxy-L-galactonate. Can use other electrophilic substrates such as L-glyceraldehyde, D- and L-lactaldehyde and D-erythrose. Also catalyzes the retro-aldol type decarboxylation of oxaloacetate, a general property of known pyruvate aldolases. This is Hydroxypyruvate/pyruvate aldolase from Rhizorhabdus wittichii (strain DSM 6014 / CCUG 31198 / JCM 15750 / NBRC 105917 / EY 4224 / RW1) (Sphingomonas wittichii).